The chain runs to 322 residues: ATP-dependent 6-phosphofructokinase (322 aa).

Glycine 12 contacts ATP. 22-26 (RATAK) contributes to the ADP binding site. Residues 73–74 (RS) and 103–106 (GDGS) contribute to the ATP site. Mg(2+) is bound at residue aspartate 104. Residue 127 to 129 (TID) coordinates substrate. The active-site Proton acceptor is the aspartate 129. ADP is bound at residue arginine 156. Substrate-binding positions include arginine 164 and 171–173 (MGR). Residues 187-189 (GGD) and 215-217 (KLH) contribute to the ADP site. Substrate-binding positions include glutamate 224, arginine 245, and 251–254 (HIQR).

The protein belongs to the phosphofructokinase type A (PFKA) family. ATP-dependent PFK group I subfamily. Prokaryotic clade 'B1' sub-subfamily. As to quaternary structure, homotetramer. The cofactor is Mg(2+).

It localises to the cytoplasm. It carries out the reaction beta-D-fructose 6-phosphate + ATP = beta-D-fructose 1,6-bisphosphate + ADP + H(+). It functions in the pathway carbohydrate degradation; glycolysis; D-glyceraldehyde 3-phosphate and glycerone phosphate from D-glucose: step 3/4. With respect to regulation, allosterically activated by ADP and other diphosphonucleosides, and allosterically inhibited by phosphoenolpyruvate. Functionally, catalyzes the phosphorylation of D-fructose 6-phosphate to fructose 1,6-bisphosphate by ATP, the first committing step of glycolysis. This chain is ATP-dependent 6-phosphofructokinase, found in Fusobacterium nucleatum subsp. nucleatum (strain ATCC 25586 / DSM 15643 / BCRC 10681 / CIP 101130 / JCM 8532 / KCTC 2640 / LMG 13131 / VPI 4355).